The primary structure comprises 278 residues: Large ribosomal subunit protein uL24m (278 aa).

Residues 109-142 enclose the KOW domain; it reads FFPGDLVQVMVGKDKGRQGLVLTTSRDSSDVIVD.

Belongs to the universal ribosomal protein uL24 family.

It localises to the mitochondrion. The protein is Large ribosomal subunit protein uL24m (mrpl-24) of Caenorhabditis elegans.